Here is a 261-residue protein sequence, read N- to C-terminus: Snake venom serine protease (261 aa).

A signal peptide spans M1 to T20. Positions A21–R24 are excised as a propeptide. One can recognise a Peptidase S1 domain in the interval I25–A249. Cystine bridges form between C31/C163, C50/C66, C98/C256, C142/C210, C174/C189, and C200/C225. Residue H65 is the Charge relay system of the active site. N103 carries N-linked (GlcNAc...) asparagine glycosylation. The active-site Charge relay system is D110. N-linked (GlcNAc...) asparagine glycosylation is found at N117 and N121. S204 acts as the Charge relay system in catalysis.

The protein belongs to the peptidase S1 family. Snake venom subfamily. Monomer. In terms of tissue distribution, expressed by the venom gland.

The protein resides in the secreted. Its function is as follows. Snake venom serine protease that may act in the hemostasis system of the prey. The chain is Snake venom serine protease from Philodryas olfersii (Green snake).